A 410-amino-acid chain; its full sequence is Dipeptidase 1 (410 aa).

An N-terminal signal peptide occupies residues 1–16 (MWTGWWLWPLVAVCTA). Zn(2+) contacts are provided by H36 and D38. N-linked (GlcNAc...) asparagine glycosylation is found at N57 and N62. The cysteines at positions 87 and 170 are disulfide-linked. E141 serves as a coordination point for Zn(2+). H168 serves as a coordination point for substrate. 2 residues coordinate Zn(2+): H214 and H235. C242 and C274 are joined by a disulfide. R246 is a binding site for substrate. N279 carries N-linked (GlcNAc...) asparagine glycosylation. D304 provides a ligand contact to substrate. The GPI-anchor amidated serine moiety is linked to residue S384. Positions 385–410 (GAPSLHLQPGTLLASLVTLLLSLCLL) are cleaved as a propeptide — removed in mature form.

Belongs to the metallo-dependent hydrolases superfamily. Peptidase M19 family. In terms of assembly, homodimer; disulfide-linked. The cofactor is Zn(2+).

The protein localises to the apical cell membrane. It carries out the reaction an L-aminoacyl-L-amino acid + H2O = 2 an L-alpha-amino acid. It catalyses the reaction leukotriene D4 + H2O = leukotriene E4 + glycine. The enzyme catalyses L-cystine-bis-glycine + 2 H2O = L-cystine + 2 glycine. The catalysed reaction is a beta-lactam + H2O = a substituted beta-amino acid. It carries out the reaction glycyldehydrophenylalanine + H2O = 2,3-didehydrophenylalanine + glycine. Its activity is regulated as follows. Inhibited by L-penicillamine. Inhibited by cilastatin. Its function is as follows. Hydrolyzes a wide range of dipeptides including the conversion of leukotriene D4 to leukotriene E4. Hydrolyzes cystinyl-bis-glycine (cys-bis-gly) formed during glutathione degradation. Also possesses beta lactamase activity and hydrolytically inactivates beta-lactam antibiotics. Independently of its dipeptidase activity, acts as an adhesion receptor for neutrophil recruitment from bloodstream into inflamed lungs and liver. This chain is Dipeptidase 1 (DPEP1), found in Bos taurus (Bovine).